Reading from the N-terminus, the 423-residue chain is Putative competence-damage inducible protein (423 aa).

Belongs to the CinA family.

The protein is Putative competence-damage inducible protein of Streptococcus thermophilus (strain ATCC BAA-491 / LMD-9).